The chain runs to 744 residues: 4'-phospho-dehydrooxetanocin synthase (744 aa).

The region spanning 119–259 (TVTLVNLCVI…KMLKKELKLD (141 aa)) is the B12-binding domain. Residues R135, S139, S184, G241, E242, and E308 each coordinate cob(II)alamin. One can recognise a Radical SAM core domain in the interval 299–545 (SKFRGALTLE…IVSYMLASME (247 aa)). Residues C313, C318, and C321 each coordinate [4Fe-4S] cluster. Cob(II)alamin is bound by residues P322, H325, K326, A361, and E363. Positions 436 and 545 each coordinate S-adenosyl-L-methionine.

It belongs to the radical SAM superfamily. [4Fe-4S] cluster serves as cofactor. It depends on cob(II)alamin as a cofactor.

The enzyme catalyses dAMP + S-adenosyl-L-methionine = 4'-phospho-dehydrooxetanocin + 5'-deoxyadenosine + L-methionine + H(+). The catalysed reaction is AH2 + 2 S-adenosyl-L-methionine = 2 5'-deoxyadenosin-5'-yl radical + 2 L-methionine + A + 2 H(+). It catalyses the reaction 2 5'-deoxyadenosin-5'-yl radical + 2 dAMP + A = 2 4'-phospho-dehydrooxetanocin + 2 5'-deoxyadenosine + AH2. With respect to regulation, requires OxsA for the oxidative ring contraction activity. Activation of OxsB requires its direct interaction with OxsA and is independent of OxsA phosphohydrolase activity. In contrast to ring contraction, methylation does not require the presence of OxsA. In terms of biological role, isomerase involved in the biosynthesis of oxetanocin A (OXT-A), a nucleoside analog with antitumor, antiviral and antibacterial properties. Catalyzes an oxidative ring contraction of dAMP, forming an oxetane aldehyde. In addition, shows methyltransferase activity in vitro and is able to catalyze the radical mediated, stereoselective C2'-methylation of dAMP to form methylated 2'-dAMP. Also catalyzes the demethylation of S-adenosyl-L-methionine (SAM) to S-adenosyl-L-homocysteine (SAH). This Priestia megaterium (Bacillus megaterium) protein is 4'-phospho-dehydrooxetanocin synthase.